Reading from the N-terminus, the 413-residue chain is Multifunctional CCA protein (413 aa).

The ATP site is built by glycine 8 and arginine 11. CTP contacts are provided by glycine 8 and arginine 11. Residues aspartate 21 and aspartate 23 each contribute to the Mg(2+) site. Positions 91, 137, and 140 each coordinate ATP. 3 residues coordinate CTP: arginine 91, arginine 137, and arginine 140. Positions 228 to 329 (TGLHTLMTVT…VKLFDSIDAW (102 aa)) constitute an HD domain.

Belongs to the tRNA nucleotidyltransferase/poly(A) polymerase family. Bacterial CCA-adding enzyme type 1 subfamily. As to quaternary structure, monomer. Can also form homodimers and oligomers. It depends on Mg(2+) as a cofactor. Ni(2+) is required as a cofactor.

The catalysed reaction is a tRNA precursor + 2 CTP + ATP = a tRNA with a 3' CCA end + 3 diphosphate. It carries out the reaction a tRNA with a 3' CCA end + 2 CTP + ATP = a tRNA with a 3' CCACCA end + 3 diphosphate. Catalyzes the addition and repair of the essential 3'-terminal CCA sequence in tRNAs without using a nucleic acid template. Adds these three nucleotides in the order of C, C, and A to the tRNA nucleotide-73, using CTP and ATP as substrates and producing inorganic pyrophosphate. tRNA 3'-terminal CCA addition is required both for tRNA processing and repair. Also involved in tRNA surveillance by mediating tandem CCA addition to generate a CCACCA at the 3' terminus of unstable tRNAs. While stable tRNAs receive only 3'-terminal CCA, unstable tRNAs are marked with CCACCA and rapidly degraded. This is Multifunctional CCA protein from Klebsiella pneumoniae (strain 342).